The chain runs to 238 residues: Ribonuclease M (238 aa).

Cystine bridges form between Cys5/Cys22, Cys13/Cys58, Cys21/Cys126, Cys66/Cys118, and Cys191/Cys225. Residue His51 is part of the active site. Asn74 is a glycosylation site (N-linked (GlcNAc...) asparagine). Active-site residues include Glu111 and His115.

This sequence belongs to the RNase T2 family.

It catalyses the reaction a ribonucleotidyl-ribonucleotide-RNA + H2O = a 3'-end 3'-phospho-ribonucleotide-RNA + a 5'-end dephospho-ribonucleoside-RNA + H(+). In terms of biological role, this is a base non-specific and adenylic acid preferential ribonuclease. The sequence is that of Ribonuclease M from Aspergillus phoenicis (Aspergillus saitoi).